The following is a 247-amino-acid chain: 2-dehydro-3-deoxy-phosphogluconate aldolase (247 aa).

The protein belongs to the DagF family.

The enzyme catalyses 2-dehydro-3-deoxy-6-phospho-D-gluconate = D-glyceraldehyde 3-phosphate + pyruvate. Its function is as follows. Involved in the catabolism of D-glucosaminate. Catalyzes the conversion of keto-3-deoxygluconate 6-phosphate (KDGP) to yield pyruvate and glyceraldehyde-3-phosphate. The chain is 2-dehydro-3-deoxy-phosphogluconate aldolase from Salmonella typhimurium (strain 14028s / SGSC 2262).